The primary structure comprises 757 residues: Elongation factor G, mitochondrial (757 aa).

A mitochondrion-targeting transit peptide spans Met1–Arg39. Residues Gln65–Ser346 enclose the tr-type G domain. GTP is bound by residues Ala74–Thr81, Asp145–His149, and Asn199–Asp202.

The protein belongs to the TRAFAC class translation factor GTPase superfamily. Classic translation factor GTPase family. EF-G/EF-2 subfamily.

Its subcellular location is the mitochondrion. It participates in protein biosynthesis; polypeptide chain elongation. Functionally, mitochondrial GTPase that catalyzes the GTP-dependent ribosomal translocation step during translation elongation. During this step, the ribosome changes from the pre-translocational (PRE) to the post-translocational (POST) state as the newly formed A-site-bound peptidyl-tRNA and P-site-bound deacylated tRNA move to the P and E sites, respectively. Catalyzes the coordinated movement of the two tRNA molecules, the mRNA and conformational changes in the ribosome. This Candida glabrata (strain ATCC 2001 / BCRC 20586 / JCM 3761 / NBRC 0622 / NRRL Y-65 / CBS 138) (Yeast) protein is Elongation factor G, mitochondrial.